A 208-amino-acid chain; its full sequence is 2-phospho-L-lactate guanylyltransferase (208 aa).

Belongs to the CofC family. In terms of assembly, homodimer.

It carries out the reaction (2S)-2-phospholactate + GTP + H(+) = (2S)-lactyl-2-diphospho-5'-guanosine + diphosphate. It functions in the pathway cofactor biosynthesis; coenzyme F420 biosynthesis. Its function is as follows. Guanylyltransferase that catalyzes the activation of (2S)-2-phospholactate (2-PL) as (2S)-lactyl-2-diphospho-5'-guanosine, via the condensation of 2-PL with GTP. It is involved in the biosynthesis of coenzyme F420, a hydride carrier cofactor. The protein is 2-phospho-L-lactate guanylyltransferase of Methanosarcina acetivorans (strain ATCC 35395 / DSM 2834 / JCM 12185 / C2A).